The sequence spans 253 residues: MLTKRIIPCLDVKGGRVVKGVQFLELRDAGDPVEIAEIYDRQGADELTFLDITASSDARDIIIDVVRRTAERVFMPLTVGGGVRTVDDIRRLLNAGADKVSINTAAVHRPEFVKEAAERFGSQCTVVAIDARRVPGEDRWEVYTHGGRNATGIDAVEWAQRMEEYGSGEILLTSMDCDGTKDGYDLSLTRSVTDAVGIPVIASGGVGNLEHFYDGFTNGGASACLAASIFHYREYTIQEAKEYLKGKGVPVRL.

Residues Asp11 and Asp130 contribute to the active site.

It belongs to the HisA/HisF family. As to quaternary structure, heterodimer of HisH and HisF.

Its subcellular location is the cytoplasm. The enzyme catalyses 5-[(5-phospho-1-deoxy-D-ribulos-1-ylimino)methylamino]-1-(5-phospho-beta-D-ribosyl)imidazole-4-carboxamide + L-glutamine = D-erythro-1-(imidazol-4-yl)glycerol 3-phosphate + 5-amino-1-(5-phospho-beta-D-ribosyl)imidazole-4-carboxamide + L-glutamate + H(+). The protein operates within amino-acid biosynthesis; L-histidine biosynthesis; L-histidine from 5-phospho-alpha-D-ribose 1-diphosphate: step 5/9. In terms of biological role, IGPS catalyzes the conversion of PRFAR and glutamine to IGP, AICAR and glutamate. The HisF subunit catalyzes the cyclization activity that produces IGP and AICAR from PRFAR using the ammonia provided by the HisH subunit. This Geotalea daltonii (strain DSM 22248 / JCM 15807 / FRC-32) (Geobacter daltonii) protein is Imidazole glycerol phosphate synthase subunit HisF.